Consider the following 444-residue polypeptide: Chromosome partition protein MukF (444 aa).

The tract at residues 212–240 (LDETSGNLRELQDTLNAAGDKLQAQLLRI) is leucine-zipper.

Belongs to the MukF family. As to quaternary structure, interacts, and probably forms a ternary complex, with MukE and MukB via its C-terminal region. The complex formation is stimulated by calcium or magnesium. It is required for an interaction between MukE and MukB.

Its subcellular location is the cytoplasm. It is found in the nucleoid. Its function is as follows. Involved in chromosome condensation, segregation and cell cycle progression. May participate in facilitating chromosome segregation by condensation DNA from both sides of a centrally located replisome during cell division. Not required for mini-F plasmid partitioning. Probably acts via its interaction with MukB and MukE. Overexpression results in anucleate cells. It has a calcium binding activity. This Haemophilus influenzae (strain PittGG) protein is Chromosome partition protein MukF.